The sequence spans 272 residues: Shikimate dehydrogenase (NADP(+)) (272 aa).

Residues 14–16 and Thr61 each bind shikimate; that span reads SKS. Lys65 serves as the catalytic Proton acceptor. Glu77 provides a ligand contact to NADP(+). 2 residues coordinate shikimate: Asn86 and Asp102. NADP(+) contacts are provided by residues 126–130, 149–154, and Met213; these read GAGGA and NRTASR. A shikimate-binding site is contributed by Tyr215. Gly237 contacts NADP(+).

It belongs to the shikimate dehydrogenase family. As to quaternary structure, homodimer.

The catalysed reaction is shikimate + NADP(+) = 3-dehydroshikimate + NADPH + H(+). The protein operates within metabolic intermediate biosynthesis; chorismate biosynthesis; chorismate from D-erythrose 4-phosphate and phosphoenolpyruvate: step 4/7. Its function is as follows. Involved in the biosynthesis of the chorismate, which leads to the biosynthesis of aromatic amino acids. Catalyzes the reversible NADPH linked reduction of 3-dehydroshikimate (DHSA) to yield shikimate (SA). The protein is Shikimate dehydrogenase (NADP(+)) of Citrobacter koseri (strain ATCC BAA-895 / CDC 4225-83 / SGSC4696).